The following is a 933-amino-acid chain: uncharacterized protein (933 aa).

The span at 244-255 shows a compositional bias: basic and acidic residues; the sequence is KKDIGAKPKPVD. 2 disordered regions span residues 244–277 and 343–364; these read KKDIGAKPKPVDDVSPQPVRARTPPENTVVELPD and SAPHQPSSQHAQMGRHSQEWKG. Polar residues predominate over residues 343 to 353; it reads SAPHQPSSQHA. Residues 771–791 form a helical membrane-spanning segment; the sequence is VIHGMVLMFAGGKLLFGGCVL. Positions 890-907 are enriched in basic and acidic residues; that stretch reads DKIEKEPPPSPEKVKPPE. The interval 890 to 933 is disordered; that stretch reads DKIEKEPPPSPEKVKPPEIELQPFTKMRRSSKKTAGFKKLNSKK. Residues 915 to 933 are compositionally biased toward basic residues; that stretch reads KMRRSSKKTAGFKKLNSKK.

It is found in the membrane. This is an uncharacterized protein from Mus musculus (Mouse).